The primary structure comprises 231 residues: Orotidine 5'-phosphate decarboxylase (231 aa).

Residues aspartate 11, lysine 33, 60–69 (DLKFHDIPNT), threonine 120, arginine 181, glutamine 190, glycine 210, and arginine 211 each bind substrate. The active-site Proton donor is the lysine 62.

The protein belongs to the OMP decarboxylase family. Type 1 subfamily. As to quaternary structure, homodimer.

The catalysed reaction is orotidine 5'-phosphate + H(+) = UMP + CO2. Its pathway is pyrimidine metabolism; UMP biosynthesis via de novo pathway; UMP from orotate: step 2/2. Its function is as follows. Catalyzes the decarboxylation of orotidine 5'-monophosphate (OMP) to uridine 5'-monophosphate (UMP). The sequence is that of Orotidine 5'-phosphate decarboxylase from Photobacterium profundum (strain SS9).